Here is a 425-residue protein sequence, read N- to C-terminus: Glyco-Gag protein (425 aa).

Residues 1-54 (MSRASSGTATGARLFGISSVLGEYRVLIGDEGAGPSRSPSEVSFSVWYRSRAAR) are Cytoplasmic-facing. Residues 55 to 75 (LVIVCLVASFLVPCLTFLIAE) traverse the membrane as a helical segment. Residues 76-425 (TVMGQTITTP…VVQGKEETPA (350 aa)) lie on the Extracellular side of the membrane. Residue Asn-137 is glycosylated (N-linked (GlcNAc...) asparagine; by host). A disordered region spans residues 174-285 (VRPFLPPPKP…LREGPNNRPQ (112 aa)). Pro residues predominate over residues 177–196 (FLPPPKPPTSLPQPLSPQPS). Low complexity predominate over residues 197 to 209 (APLTSSLYPVLPK). Pro residues-rich tracts occupy residues 213-223 (PKPPVLPPDPS) and 233-248 (EPPP…PSGP).

In terms of processing, glycosylated by host. Cleaved by host near the middle of the molecule, releasing the c-terminal half containing capsid and nucleoprotein domains op GAG.

The protein localises to the host cell membrane. In terms of biological role, plays a role in viral particle release. Presumably acts by facilitating the fission of the virion bud at the cell surface. This is Glyco-Gag protein from Felidae (cat family).